We begin with the raw amino-acid sequence, 337 residues long: RNA 3'-terminal phosphate cyclase (337 aa).

ATP contacts are provided by residues Gln-101 and 282–285 (HMSD). His-306 acts as the Tele-AMP-histidine intermediate in catalysis.

It belongs to the RNA 3'-terminal cyclase family. Type 1 subfamily.

The protein resides in the cytoplasm. It carries out the reaction a 3'-end 3'-phospho-ribonucleotide-RNA + ATP = a 3'-end 2',3'-cyclophospho-ribonucleotide-RNA + AMP + diphosphate. Its function is as follows. Catalyzes the conversion of 3'-phosphate to a 2',3'-cyclic phosphodiester at the end of RNA. The mechanism of action of the enzyme occurs in 3 steps: (A) adenylation of the enzyme by ATP; (B) transfer of adenylate to an RNA-N3'P to produce RNA-N3'PP5'A; (C) and attack of the adjacent 2'-hydroxyl on the 3'-phosphorus in the diester linkage to produce the cyclic end product. The biological role of this enzyme is unknown but it is likely to function in some aspects of cellular RNA processing. The protein is RNA 3'-terminal phosphate cyclase of Saccharolobus islandicus (strain M.16.27) (Sulfolobus islandicus).